A 184-amino-acid chain; its full sequence is Large ribosomal subunit protein eL13 (184 aa).

A disordered region spans residues P28–P53. Basic residues predominate over residues K31–A42.

The protein belongs to the eukaryotic ribosomal protein eL13 family.

The sequence is that of Large ribosomal subunit protein eL13 (RPL13) from Schistosoma mansoni (Blood fluke).